An 817-amino-acid chain; its full sequence is Two pore calcium channel protein 1 (817 aa).

Over 1 to 113 (MAVSLDDDVP…VHNHFFYMME (113 aa)) the chain is Cytoplasmic. The segment at 20–65 (SAPLPPSNSLGQEQLPSKNGGSHSIHNSQVPSLVSGADSPPSSPTG) is disordered. A compositionally biased stretch (polar residues) spans 26-51 (SNSLGQEQLPSKNGGSHSIHNSQVPS). Residues 114–134 (LLTALLLLLLSLCESPAVPVL) form a helical membrane-spanning segment. Residues 135–137 (KLH) lie on the Extracellular side of the membrane. A helical membrane pass occupies residues 138–158 (TYVHATLELFALMVVVFELCM). Residues 159 to 172 (KLRWLGFHTFVRHK) lie on the Cytoplasmic side of the membrane. The helical transmembrane segment at 173–193 (RTMVKTSVLVVQFIEAIVVLV) threads the bilayer. Over 194-202 (RQTSHVRVT) the chain is Extracellular. A helical membrane pass occupies residues 203-221 (RALRCIFLVDCRYCGGVRR). The Cytoplasmic segment spans residues 222-235 (NLRQIFQSLPPFMD). Residues 236–256 (ILLLLLFFMIIFAILGFYLFS) form a helical membrane-spanning segment. The Extracellular portion of the chain corresponds to 257–263 (TNPSDPY). Residues 264-287 (FSTLENSIVNLFVLLTTANFPDVM) constitute an intramembrane region (helical; Pore-forming). Topologically, residues 288-298 (MPSYSRNPWSC) are extracellular. Residues 299–319 (VFFIVYLSIELYFIMNLLLAV) traverse the membrane as a helical segment. The Cytoplasmic segment spans residues 320–445 (VFDTFNDIEK…NILVNSKAFQ (126 aa)). A helical transmembrane segment spans residues 446–466 (YFMYLVVAVNGVWILVETFML). Residues 467-480 (KGGNFTSKHVPWSY) lie on the Extracellular side of the membrane. Asparagine 470 carries N-linked (GlcNAc...) asparagine glycosylation. A helical transmembrane segment spans residues 481-501 (LVFLTIYGVELFMKVAGLGPV). At 502-504 (EYL) the chain is on the cytoplasmic side. Residues 505–527 (SSGWNLFDFSVTAFAFLGLLALT) form a helical membrane-spanning segment. At 528-535 (LNMEPFYF) the chain is on the extracellular side. Residues 536–550 (IVVLRPLQLLRLFKL) traverse the membrane as a helical segment. Residues 551 to 569 (KKRYRNVLDTMFELLPRMA) lie on the Cytoplasmic side of the membrane. A helical membrane pass occupies residues 570 to 590 (SLGLTLLTFYYSFAIVGMEFF). Topologically, residues 591–630 (NGRLTPNCCNTSTVADAYRFINHTVGNKTKVEEGYYYLNN) are extracellular. An intramembrane region (helical; Pore-forming) is located at residues 631–654 (FDNILNSFVTLFELTVVNNWYIIM). The Extracellular segment spans residues 655 to 671 (EGVTSQTSHWSRLYFMT). The chain crosses the membrane as a helical span at residues 672-692 (FYIVTMVVMTIIVAFILEAFV). Topologically, residues 693–817 (FRMNYSRKSQ…GSRQRSQTVT (125 aa)) are cytoplasmic. The stretch at 770 to 794 (SLKMYQEEIQEWYEEHAREQEQQKL) forms a coiled coil. Residues 785–817 (HAREQEQQKLRGSVPGPAAQQPPGSRQRSQTVT) are disordered. Residues 806-817 (PPGSRQRSQTVT) are compositionally biased toward polar residues.

This sequence belongs to the calcium channel alpha-1 subunit (TC 1.A.1.11) family. Two pore calcium channel subfamily. In terms of assembly, dimer. Interacts with MTOR; the interaction is required for TPCN1 ATP sensitivity. Interacts with STX7, STX8 and STX12. Interacts with JPT2. Found in a complex with LSM12, TPCN1 and TPCN2. In terms of processing, N-glycosylated. As to expression, mainly expressed in epithelial tissues like lung, kidney, colon, spleen and liver (at protein level).

The protein localises to the lysosome membrane. It is found in the endosome membrane. The protein resides in the early endosome membrane. It localises to the recycling endosome membrane. The enzyme catalyses Na(+)(in) = Na(+)(out). It carries out the reaction Ca(2+)(in) = Ca(2+)(out). With respect to regulation, na(+) current is inhibited by ATP in a MTORC-dependent manner. ATP sensitivity is independent of PI(3,5)P2. Probably regulated by Mg(2+) ions, cytosolic Mg(2+) selectively inhibits outward current while lysosomal Mg(2+) modestly inhibits both the outward and inward currents. In the absence of Mg(2+), NAADP readily activates TPCN2, with properties similar to PI(3,5)P2. Both current elicited by PI(3,5)P2 as well as NAADP are inhibited by tetrandrine. Intracellular channel initially characterized as a non-selective Ca(2+)-permeable channel activated by NAADP (nicotinic acid adenine dinucleotide phosphate), it is also a voltage-gated highly-selective Na(+) channel activated directly by PI(3,5)P2 (phosphatidylinositol 3,5-bisphosphate) that senses pH changes and confers electrical excitability to organelles. Localizes to the early and recycling endosomes membranes where it plays a role in the uptake and processing of proteins and regulates organellar membrane excitability, membrane trafficking and pH homeostasis. Ion selectivity is not fixed but rather agonist-dependent and under defined ionic conditions, can be readily activated by both NAADP and PI(3,5)P2. Required for mTOR-dependent nutrient sensing. The protein is Two pore calcium channel protein 1 of Mus musculus (Mouse).